Consider the following 558-residue polypeptide: NAD(P)H-quinone oxidoreductase chain 4 (558 aa).

15 helical membrane-spanning segments follow: residues F25 to V45, W56 to G76, V90 to P110, L111 to F131, P133 to V153, L157 to W177, F189 to F209, G230 to V250, T264 to M284, F298 to F318, I327 to E347, A353 to A373, F397 to V417, I438 to M458, and V485 to M505.

It belongs to the complex I subunit 4 family.

It localises to the cellular thylakoid membrane. It catalyses the reaction a plastoquinone + NADH + (n+1) H(+)(in) = a plastoquinol + NAD(+) + n H(+)(out). The enzyme catalyses a plastoquinone + NADPH + (n+1) H(+)(in) = a plastoquinol + NADP(+) + n H(+)(out). NDH-1 shuttles electrons from NAD(P)H, via FMN and iron-sulfur (Fe-S) centers, to quinones in the respiratory chain. The immediate electron acceptor for the enzyme in this species is believed to be plastoquinone. Couples the redox reaction to proton translocation (for every two electrons transferred, four hydrogen ions are translocated across the cytoplasmic membrane), and thus conserves the redox energy in a proton gradient. The polypeptide is NAD(P)H-quinone oxidoreductase chain 4 (Synechococcus sp. (strain CC9311)).